The chain runs to 460 residues: Cysteine--tRNA ligase (460 aa).

Cys-28 lines the Zn(2+) pocket. Positions 30 to 40 (VTIYDLCHIGH) match the 'HIGH' region motif. 3 residues coordinate Zn(2+): Cys-209, His-234, and Glu-238. A 'KMSKS' region motif is present at residues 266–270 (KMSKS). Lys-269 provides a ligand contact to ATP.

It belongs to the class-I aminoacyl-tRNA synthetase family. In terms of assembly, monomer. Requires Zn(2+) as cofactor.

It is found in the cytoplasm. The catalysed reaction is tRNA(Cys) + L-cysteine + ATP = L-cysteinyl-tRNA(Cys) + AMP + diphosphate. The chain is Cysteine--tRNA ligase from Vibrio vulnificus (strain YJ016).